Reading from the N-terminus, the 85-residue chain is YcgL domain-containing protein ECA2367 (85 aa).

The region spanning 1–85 (MFCVIYRSVK…PVESLLTTPV (85 aa)) is the YcgL domain.

In Pectobacterium atrosepticum (strain SCRI 1043 / ATCC BAA-672) (Erwinia carotovora subsp. atroseptica), this protein is YcgL domain-containing protein ECA2367.